The primary structure comprises 199 residues: Probable chemoreceptor glutamine deamidase CheD (199 aa).

Belongs to the CheD family.

It catalyses the reaction L-glutaminyl-[protein] + H2O = L-glutamyl-[protein] + NH4(+). In terms of biological role, probably deamidates glutamine residues to glutamate on methyl-accepting chemotaxis receptors (MCPs), playing an important role in chemotaxis. This chain is Probable chemoreceptor glutamine deamidase CheD, found in Cereibacter sphaeroides (strain ATCC 17023 / DSM 158 / JCM 6121 / CCUG 31486 / LMG 2827 / NBRC 12203 / NCIMB 8253 / ATH 2.4.1.) (Rhodobacter sphaeroides).